Here is a 999-residue protein sequence, read N- to C-terminus: Disks large-associated protein 1 (999 aa).

3 disordered regions span residues 155-213 (HSLE…GYWS), 395-418 (MAED…ARRA), and 918-989 (NWRP…DSIE). A compositionally biased stretch (basic and acidic residues) spans 194-204 (RERCKSAEPKN). 2 stretches are compositionally biased toward basic and acidic residues: residues 923–932 (DPPERKERRL) and 947–965 (LARD…EARK). Positions 976-985 (VRQNSATESA) are enriched in polar residues. The short motif at 997–999 (TRL) is the PDZ-binding element.

Belongs to the SAPAP family.

The protein localises to the cell membrane. It is found in the postsynaptic density. The protein resides in the synapse. Functionally, part of the postsynaptic scaffold in neuronal cells. The polypeptide is Disks large-associated protein 1 (Danio rerio (Zebrafish)).